A 184-amino-acid chain; its full sequence is ATP synthase subunit b 1 (184 aa).

Residues 4-24 (LSILAVLAASPAMAATGPFLS) form a helical membrane-spanning segment.

It belongs to the ATPase B chain family. As to quaternary structure, F-type ATPases have 2 components, F(1) - the catalytic core - and F(0) - the membrane proton channel. F(1) has five subunits: alpha(3), beta(3), gamma(1), delta(1), epsilon(1). F(0) has three main subunits: a(1), b(2) and c(10-14). The alpha and beta chains form an alternating ring which encloses part of the gamma chain. F(1) is attached to F(0) by a central stalk formed by the gamma and epsilon chains, while a peripheral stalk is formed by the delta and b chains.

The protein resides in the cell inner membrane. In terms of biological role, f(1)F(0) ATP synthase produces ATP from ADP in the presence of a proton or sodium gradient. F-type ATPases consist of two structural domains, F(1) containing the extramembraneous catalytic core and F(0) containing the membrane proton channel, linked together by a central stalk and a peripheral stalk. During catalysis, ATP synthesis in the catalytic domain of F(1) is coupled via a rotary mechanism of the central stalk subunits to proton translocation. Its function is as follows. Component of the F(0) channel, it forms part of the peripheral stalk, linking F(1) to F(0). The protein is ATP synthase subunit b 1 of Cereibacter sphaeroides (strain ATCC 17029 / ATH 2.4.9) (Rhodobacter sphaeroides).